A 761-amino-acid chain; its full sequence is Complement factor B (761 aa).

The first 25 residues, 1–25 (MGIGHNPRLCLVPLILGLLCGGVGM), serve as a signal peptide directing secretion. 3 Sushi domains span residues 35-100 (SPCS…ECKA), 101-160 (IRCP…ICDD), and 163-220 (TYCP…SCQD). Intrachain disulfides connect Cys37/Cys76, Cys62/Cys98, Cys103/Cys145, Cys131/Cys158, Cys165/Cys205, and Cys191/Cys218. 2 N-linked (GlcNAc...) asparagine glycosylation sites follow: Asn122 and Asn142. In terms of domain architecture, VWFA spans 270–469 (NIYLVLDGSD…NLEDVFVQML (200 aa)). Ser278 and Ser280 together coordinate Mg(2+). The N-linked (GlcNAc...) asparagine glycan is linked to Asn285. A Mg(2+)-binding site is contributed by Thr353. Asn378 carries N-linked (GlcNAc...) asparagine glycosylation. The Peptidase S1 domain occupies 477 to 754 (LCGMVWEHKD…VLPWLKEKLQ (278 aa)). 5 disulfides stabilise this stretch: Cys478/Cys596, Cys511/Cys527, Cys599/Cys615, Cys656/Cys682, and Cys695/Cys725. Active-site charge relay system residues include His526 and Asp576. Catalysis depends on Ser699, which acts as the Charge relay system.

The protein belongs to the peptidase S1 family. As to quaternary structure, monomer. Interacts with complement C3b; this interaction is dependent on the presence of Mg(2+). Catalytic component of the C3 convertase of the alternative complement pathway, also named C3bBb, composed of complement factor B Bb and complement C3b. Catalytic component of the C5 convertase of the alternative complement pathway, also named C3bBb3b, composed of complement factor B Bb and additional molecules of complement C3b. Interacts to CFP; this interaction contributes to the stabilization of the active C3-convertase enzyme complex. Mg(2+) serves as cofactor. The cofactor is Mn(2+). Post-translationally, cleaved by CFD following activation of the alternative complement system, generating Ba and Bb chains. Cleavage and activation takes place when CFB is already associated with complement C3b.

The protein resides in the secreted. The protein localises to the cell surface. It carries out the reaction Cleavage of Arg-|-Ser bond in complement component C3 alpha-chain to yield C3a and C3b, and Arg-|-Xaa bond in complement component C5 alpha-chain to yield C5a and C5b.. In terms of biological role, precursor of the catalytic component of the C3 and C5 convertase complexes of the alternative pathway of the complement system, a cascade of proteins that leads to phagocytosis and breakdown of pathogens and signaling that strengthens the adaptive immune system. The alternative complement pathway acts as an amplification loop that enhances other complement pathways (classical, lectin and GZMK) by promoting formation of additional C3 and C5 convertases. CFB is cleaved and activated by CFD to generate Ba and Bb chains; Bb chain constituting the catalytic component of the C3 and C5 convertases. Its function is as follows. Serine protease component of the complement C3 and C5 convertase complexes of the alternative complement pathway. Following cleavage and activation by factor D (CFD), forms the C3 convertase together with complement C3b. As part of the C3 convertase, cleaves and activates C3 into C3a anaphylatoxin and C3b opsonin, the next components of the complement pathways. When an additional complement C3b molecule binds to the C3 convertase, forms the C5 convertase, which cleaves and activates C5 into C5a anaphylatoxin and C5b component of the membrane attack complex. Involved in proliferation and differentiation of preactivated B-lymphocytes, rapid spreading of peripheral blood monocytes, stimulation of lymphocyte blastogenesis and lysis of erythrocytes. The protein is Complement factor B (CFB) of Bos taurus (Bovine).